The sequence spans 311 residues: MSKLLVFGHQNPDTDAIASSYAFDYLAKKAFDLDTEVVALGDPNEETAFALDYFGVSAPRVVTSAKAEGASHVILTDHNEFPQSISDIREVEVYGIVDHHRVANFETANPLYMRVEPVGSASSIVYRLFKENRVDVPKDIAGMLLSGLISDTLLLKSPTTHASDHRVAAELAELAGVKLEEYGMAMLKAGTNLASKSEAELIDIDAKTFELNGNAVRVAQVNTVDIAEVLERKEAIEAAIREVMASEGYSDFVLMITDIVNSNSEILALGANMDKVEAAFSFKLEDNHAFLAGAVSRKKQVVPQLTESFGA.

6 residues coordinate Mn(2+): histidine 9, aspartate 13, aspartate 15, aspartate 77, histidine 99, and aspartate 151.

Belongs to the PPase class C family. The cofactor is Mn(2+).

The protein resides in the cytoplasm. It carries out the reaction diphosphate + H2O = 2 phosphate + H(+). The polypeptide is Probable manganese-dependent inorganic pyrophosphatase (Streptococcus equi subsp. equi (strain 4047)).